A 711-amino-acid chain; its full sequence is Ribosomal RNA large subunit methyltransferase K/L (711 aa).

One can recognise a THUMP domain in the interval 42 to 153 (DAQRAVLWSR…KGRATISVDL (112 aa)).

This sequence belongs to the methyltransferase superfamily. RlmKL family.

The protein resides in the cytoplasm. It catalyses the reaction guanosine(2445) in 23S rRNA + S-adenosyl-L-methionine = N(2)-methylguanosine(2445) in 23S rRNA + S-adenosyl-L-homocysteine + H(+). The enzyme catalyses guanosine(2069) in 23S rRNA + S-adenosyl-L-methionine = N(2)-methylguanosine(2069) in 23S rRNA + S-adenosyl-L-homocysteine + H(+). Specifically methylates the guanine in position 2445 (m2G2445) and the guanine in position 2069 (m7G2069) of 23S rRNA. The sequence is that of Ribosomal RNA large subunit methyltransferase K/L from Xanthomonas oryzae pv. oryzae (strain MAFF 311018).